The chain runs to 431 residues: Glutamate-1-semialdehyde 2,1-aminomutase (431 aa).

An N6-(pyridoxal phosphate)lysine modification is found at Lys267.

Belongs to the class-III pyridoxal-phosphate-dependent aminotransferase family. HemL subfamily. As to quaternary structure, homodimer. Pyridoxal 5'-phosphate is required as a cofactor.

Its subcellular location is the cytoplasm. It catalyses the reaction (S)-4-amino-5-oxopentanoate = 5-aminolevulinate. It functions in the pathway porphyrin-containing compound metabolism; protoporphyrin-IX biosynthesis; 5-aminolevulinate from L-glutamyl-tRNA(Glu): step 2/2. In Myxococcus xanthus (strain DK1622), this protein is Glutamate-1-semialdehyde 2,1-aminomutase.